Here is a 330-residue protein sequence, read N- to C-terminus: Phosphate acyltransferase (330 aa).

This sequence belongs to the PlsX family. Homodimer. Probably interacts with PlsY.

The protein resides in the cytoplasm. The catalysed reaction is a fatty acyl-[ACP] + phosphate = an acyl phosphate + holo-[ACP]. It functions in the pathway lipid metabolism; phospholipid metabolism. Its function is as follows. Catalyzes the reversible formation of acyl-phosphate (acyl-PO(4)) from acyl-[acyl-carrier-protein] (acyl-ACP). This enzyme utilizes acyl-ACP as fatty acyl donor, but not acyl-CoA. The sequence is that of Phosphate acyltransferase from Bacillus licheniformis (strain ATCC 14580 / DSM 13 / JCM 2505 / CCUG 7422 / NBRC 12200 / NCIMB 9375 / NCTC 10341 / NRRL NRS-1264 / Gibson 46).